The following is a 159-amino-acid chain: Ribosomal RNA large subunit methyltransferase H (159 aa).

S-adenosyl-L-methionine-binding positions include leucine 76, glycine 108, and 127–132 (FSKMTF).

The protein belongs to the RNA methyltransferase RlmH family. As to quaternary structure, homodimer.

Its subcellular location is the cytoplasm. It catalyses the reaction pseudouridine(1915) in 23S rRNA + S-adenosyl-L-methionine = N(3)-methylpseudouridine(1915) in 23S rRNA + S-adenosyl-L-homocysteine + H(+). Its function is as follows. Specifically methylates the pseudouridine at position 1915 (m3Psi1915) in 23S rRNA. The polypeptide is Ribosomal RNA large subunit methyltransferase H (Shouchella clausii (strain KSM-K16) (Alkalihalobacillus clausii)).